Consider the following 333-residue polypeptide: Phosphate acyltransferase (333 aa).

It belongs to the PlsX family. Homodimer. Probably interacts with PlsY.

The protein resides in the cytoplasm. It catalyses the reaction a fatty acyl-[ACP] + phosphate = an acyl phosphate + holo-[ACP]. It functions in the pathway lipid metabolism; phospholipid metabolism. Its function is as follows. Catalyzes the reversible formation of acyl-phosphate (acyl-PO(4)) from acyl-[acyl-carrier-protein] (acyl-ACP). This enzyme utilizes acyl-ACP as fatty acyl donor, but not acyl-CoA. The protein is Phosphate acyltransferase of Lactobacillus gasseri (strain ATCC 33323 / DSM 20243 / BCRC 14619 / CIP 102991 / JCM 1131 / KCTC 3163 / NCIMB 11718 / NCTC 13722 / AM63).